The sequence spans 223 residues: Small ribosomal subunit protein uS3 (223 aa).

The KH type-2 domain occupies 39-108; the sequence is IRKFVKKKGA…VILINIVEVK (70 aa).

Belongs to the universal ribosomal protein uS3 family. Part of the 30S ribosomal subunit. Forms a tight complex with proteins S10 and S14.

Its function is as follows. Binds the lower part of the 30S subunit head. Binds mRNA in the 70S ribosome, positioning it for translation. This chain is Small ribosomal subunit protein uS3, found in Clostridium kluyveri (strain NBRC 12016).